Here is a 367-residue protein sequence, read N- to C-terminus: Heme A synthase 2 (367 aa).

Transmembrane regions (helical) follow at residues 28 to 48 (MVAIWLFVSFALIVEMFGIGA), 114 to 134 (MWGRLLGFDFGVPLVWFLWTG), 143 to 163 (WLVTLFVLGGVQGLIGWWMVA), 180 to 200 (VHYCFATLLAIAVFATALTVL), and 221 to 241 (MAMGSIVLISIAIVAGTFLSG). H284 provides a ligand contact to heme. Transmembrane regions (helical) follow at residues 286-306 (LLGTVAAVGVLAAVVAAIRAD), 314-334 (AFLVMGALLIVQYILGVTTLV), and 340-360 (IGIVHQLNAVLLLAAAVWAWF). Heme is bound at residue H344.

It belongs to the COX15/CtaA family. Type 2 subfamily. As to quaternary structure, interacts with CtaB. It depends on heme b as a cofactor.

It localises to the cell membrane. The catalysed reaction is Fe(II)-heme o + 2 A + H2O = Fe(II)-heme a + 2 AH2. It functions in the pathway porphyrin-containing compound metabolism; heme A biosynthesis; heme A from heme O: step 1/1. Functionally, catalyzes the conversion of heme O to heme A by two successive hydroxylations of the methyl group at C8. The first hydroxylation forms heme I, the second hydroxylation results in an unstable dihydroxymethyl group, which spontaneously dehydrates, resulting in the formyl group of heme A. In Acidiphilium cryptum (strain JF-5), this protein is Heme A synthase 2.